We begin with the raw amino-acid sequence, 395 residues long: Peptide-N(4)-(N-acetyl-beta-glucosaminyl)asparagine amidase (395 aa).

Positions 131, 134, 172, and 175 each coordinate Zn(2+). The active-site Nucleophile is the Cys198. Catalysis depends on residues His232 and Asp249. Glu252 lines the substrate pocket. The interval 363–395 (PELTKTTPSTDLPSGRQSGSTEWTKSRGENGES) is disordered. Residues 366–385 (TKTTPSTDLPSGRQSGSTEW) show a composition bias toward polar residues. The segment covering 386 to 395 (TKSRGENGES) has biased composition (basic and acidic residues).

This sequence belongs to the transglutaminase-like superfamily. PNGase family. The cofactor is Zn(2+).

The protein resides in the cytoplasm. The catalysed reaction is Hydrolysis of an N(4)-(acetyl-beta-D-glucosaminyl)asparagine residue in which the glucosamine residue may be further glycosylated, to yield a (substituted) N-acetyl-beta-D-glucosaminylamine and a peptide containing an aspartate residue.. Functionally, specifically deglycosylates the denatured form of N-linked glycoproteins in the cytoplasm and assists their proteasome-mediated degradation. Cleaves the beta-aspartyl-glucosamine (GlcNAc) of the glycan and the amide side chain of Asn, converting Asn to Asp. Prefers proteins containing high-mannose over those bearing complex type oligosaccharides. Can recognize misfolded proteins in the endoplasmic reticulum that are exported to the cytosol to be destroyed and deglycosylate them, while it has no activity toward native proteins. Deglycosylation is a prerequisite for subsequent proteasome-mediated degradation of some, but not all, misfolded glycoproteins. This is Peptide-N(4)-(N-acetyl-beta-glucosaminyl)asparagine amidase (PNG1) from Candida albicans (strain SC5314 / ATCC MYA-2876) (Yeast).